Consider the following 285-residue polypeptide: DNA repair protein RecO (285 aa).

It belongs to the RecO family.

Its function is as follows. Involved in DNA repair and RecF pathway recombination. The chain is DNA repair protein RecO from Synechococcus sp. (strain JA-2-3B'a(2-13)) (Cyanobacteria bacterium Yellowstone B-Prime).